Consider the following 271-residue polypeptide: 3-methyl-2-oxobutanoate hydroxymethyltransferase (271 aa).

The Mg(2+) site is built by Asp51 and Asp90. 3-methyl-2-oxobutanoate contacts are provided by residues 51 to 52, Asp90, and Lys119; that span reads DS. Glu121 lines the Mg(2+) pocket. The active-site Proton acceptor is the Glu188.

This sequence belongs to the PanB family. In terms of assembly, homodecamer; pentamer of dimers. Requires Mg(2+) as cofactor.

The protein localises to the cytoplasm. It catalyses the reaction 3-methyl-2-oxobutanoate + (6R)-5,10-methylene-5,6,7,8-tetrahydrofolate + H2O = 2-dehydropantoate + (6S)-5,6,7,8-tetrahydrofolate. It functions in the pathway cofactor biosynthesis; (R)-pantothenate biosynthesis; (R)-pantoate from 3-methyl-2-oxobutanoate: step 1/2. Catalyzes the reversible reaction in which hydroxymethyl group from 5,10-methylenetetrahydrofolate is transferred onto alpha-ketoisovalerate to form ketopantoate. The sequence is that of 3-methyl-2-oxobutanoate hydroxymethyltransferase from Aromatoleum aromaticum (strain DSM 19018 / LMG 30748 / EbN1) (Azoarcus sp. (strain EbN1)).